Consider the following 384-residue polypeptide: 1-deoxy-D-xylulose 5-phosphate reductoisomerase (384 aa).

Residues threonine 10, glycine 11, serine 12, isoleucine 13, arginine 37, asparagine 38, and asparagine 124 each coordinate NADPH. Lysine 125 contributes to the 1-deoxy-D-xylulose 5-phosphate binding site. NADPH is bound at residue glutamate 126. Residue aspartate 150 participates in Mn(2+) binding. Positions 151, 152, 176, and 199 each coordinate 1-deoxy-D-xylulose 5-phosphate. Glutamate 152 is a binding site for Mn(2+). Glycine 205 contributes to the NADPH binding site. 1-deoxy-D-xylulose 5-phosphate contacts are provided by serine 212, asparagine 217, lysine 218, and glutamate 221. Glutamate 221 is a binding site for Mn(2+).

It belongs to the DXR family. Mg(2+) serves as cofactor. It depends on Mn(2+) as a cofactor.

The enzyme catalyses 2-C-methyl-D-erythritol 4-phosphate + NADP(+) = 1-deoxy-D-xylulose 5-phosphate + NADPH + H(+). It participates in isoprenoid biosynthesis; isopentenyl diphosphate biosynthesis via DXP pathway; isopentenyl diphosphate from 1-deoxy-D-xylulose 5-phosphate: step 1/6. Functionally, catalyzes the NADPH-dependent rearrangement and reduction of 1-deoxy-D-xylulose-5-phosphate (DXP) to 2-C-methyl-D-erythritol 4-phosphate (MEP). The chain is 1-deoxy-D-xylulose 5-phosphate reductoisomerase from Clostridium perfringens (strain 13 / Type A).